Consider the following 557-residue polypeptide: Dihydroxy-acid dehydratase (557 aa).

Asp-78 contacts Mg(2+). Cys-119 serves as a coordination point for [2Fe-2S] cluster. Mg(2+)-binding residues include Asp-120 and Lys-121. N6-carboxylysine is present on Lys-121. Position 192 (Cys-192) interacts with [2Fe-2S] cluster. Glu-442 provides a ligand contact to Mg(2+). Ser-468 serves as the catalytic Proton acceptor.

Belongs to the IlvD/Edd family. As to quaternary structure, homodimer. [2Fe-2S] cluster serves as cofactor. Mg(2+) is required as a cofactor.

It catalyses the reaction (2R)-2,3-dihydroxy-3-methylbutanoate = 3-methyl-2-oxobutanoate + H2O. The enzyme catalyses (2R,3R)-2,3-dihydroxy-3-methylpentanoate = (S)-3-methyl-2-oxopentanoate + H2O. Its pathway is amino-acid biosynthesis; L-isoleucine biosynthesis; L-isoleucine from 2-oxobutanoate: step 3/4. It functions in the pathway amino-acid biosynthesis; L-valine biosynthesis; L-valine from pyruvate: step 3/4. Its function is as follows. Functions in the biosynthesis of branched-chain amino acids. Catalyzes the dehydration of (2R,3R)-2,3-dihydroxy-3-methylpentanoate (2,3-dihydroxy-3-methylvalerate) into 2-oxo-3-methylpentanoate (2-oxo-3-methylvalerate) and of (2R)-2,3-dihydroxy-3-methylbutanoate (2,3-dihydroxyisovalerate) into 2-oxo-3-methylbutanoate (2-oxoisovalerate), the penultimate precursor to L-isoleucine and L-valine, respectively. In Bacillus cereus (strain G9842), this protein is Dihydroxy-acid dehydratase.